A 579-amino-acid polypeptide reads, in one-letter code: Zinc finger protein 384 (579 aa).

The interval 171 to 198 (TLTEEGGGGGGGGGTVAPPKPPRGRKKK) is disordered. Gly residues predominate over residues 175-185 (EGGGGGGGGGT). C2H2-type zinc fingers lie at residues 229–251 (YRCR…SKSH), 257–279 (HKCP…IRIH), 285–307 (YSCN…TRIH), 318–340 (HKCP…LRIH), 346–368 (YNCS…TRIH), 374–398 (YKCA…RRQH), 404–426 (FKCH…LSTH), and 434–456 (YTCT…MRKH). Residues 500–513 (QAQASQASQQQQQQ) are compositionally biased toward low complexity. Residues 500 to 553 (QAQASQASQQQQQQQPPPPQPPHFQSPGAAPQGGGGGDSNQNPPPQCSFDLTPY) form a disordered region. Positions 514-523 (QPPPPQPPHF) are enriched in pro residues.

Belongs to the krueppel C2H2-type zinc-finger protein family. As to quaternary structure, interacts with BCAR1. Expressed in osteocytes, osteoblasts, and chondrocytes in bone.

The protein localises to the nucleus. Functionally, transcription factor that binds the consensus DNA sequence [GC]AAAAA. Seems to bind and regulate the promoters of MMP1, MMP3, MMP7 and COL1A1. This chain is Zinc finger protein 384 (Znf384), found in Rattus norvegicus (Rat).